Consider the following 154-residue polypeptide: Transcriptional repressor NrdR (154 aa).

The segment at 3–34 (CPFCGAHDTKVIDSRLVAEGDQVRRRRECLAC) is a zinc-finger region. Positions 49–139 (PRLIKQDGSR…VYRRFQDLNE (91 aa)) constitute an ATP-cone domain.

Belongs to the NrdR family. Zn(2+) is required as a cofactor.

In terms of biological role, negatively regulates transcription of bacterial ribonucleotide reductase nrd genes and operons by binding to NrdR-boxes. This is Transcriptional repressor NrdR from Pseudomonas aeruginosa (strain LESB58).